The following is a 394-amino-acid chain: Acetyl-CoA acetyltransferase (394 aa).

The active-site Acyl-thioester intermediate is C88. Residues H349 and C379 each act as proton acceptor in the active site.

Belongs to the thiolase-like superfamily. Thiolase family.

It is found in the cytoplasm. It catalyses the reaction 2 acetyl-CoA = acetoacetyl-CoA + CoA. The protein operates within metabolic intermediate biosynthesis; (R)-mevalonate biosynthesis; (R)-mevalonate from acetyl-CoA: step 1/3. This Escherichia coli (strain K12) protein is Acetyl-CoA acetyltransferase (atoB).